A 473-amino-acid chain; its full sequence is Photosystem II CP43 reaction center protein (473 aa).

Residues methionine 1 to glutamate 14 constitute a propeptide that is removed on maturation. Threonine 15 bears the N-acetylthreonine mark. At threonine 15 the chain carries Phosphothreonine. The next 5 membrane-spanning stretches (helical) occupy residues leucine 69 to alanine 93, leucine 134 to asparagine 155, lysine 178 to threonine 200, lysine 255 to serine 275, and tryptophan 291 to alanine 312. Glutamate 367 is a [CaMn4O5] cluster binding site. Residues arginine 447–proline 471 traverse the membrane as a helical segment.

Belongs to the PsbB/PsbC family. PsbC subfamily. In terms of assembly, PSII is composed of 1 copy each of membrane proteins PsbA, PsbB, PsbC, PsbD, PsbE, PsbF, PsbH, PsbI, PsbJ, PsbK, PsbL, PsbM, PsbT, PsbX, PsbY, PsbZ, Psb30/Ycf12, at least 3 peripheral proteins of the oxygen-evolving complex and a large number of cofactors. It forms dimeric complexes. Requires Binds multiple chlorophylls and provides some of the ligands for the Ca-4Mn-5O cluster of the oxygen-evolving complex. It may also provide a ligand for a Cl- that is required for oxygen evolution. PSII binds additional chlorophylls, carotenoids and specific lipids. as cofactor.

The protein resides in the plastid. Its subcellular location is the chloroplast thylakoid membrane. Functionally, one of the components of the core complex of photosystem II (PSII). It binds chlorophyll and helps catalyze the primary light-induced photochemical processes of PSII. PSII is a light-driven water:plastoquinone oxidoreductase, using light energy to abstract electrons from H(2)O, generating O(2) and a proton gradient subsequently used for ATP formation. This is Photosystem II CP43 reaction center protein from Cicer arietinum (Chickpea).